The sequence spans 390 residues: Elongation factor Tu 1 (390 aa).

The 192-residue stretch at 10–201 (KPHVNVGTIG…LDEYVAVPPR (192 aa)) folds into the tr-type G domain. The G1 stretch occupies residues 19–26 (GHVDHGKT). 19–26 (GHVDHGKT) contacts GTP. T26 is a binding site for Mg(2+). Positions 55 to 59 (GITIA) are G2. The interval 76–79 (DCPG) is G3. GTP-binding positions include 76–80 (DCPGH) and 131–134 (NKAD). Positions 131–134 (NKAD) are G4. Residues 168 to 170 (SAL) are G5.

This sequence belongs to the TRAFAC class translation factor GTPase superfamily. Classic translation factor GTPase family. EF-Tu/EF-1A subfamily. As to quaternary structure, monomer.

Its subcellular location is the cytoplasm. The enzyme catalyses GTP + H2O = GDP + phosphate + H(+). In terms of biological role, GTP hydrolase that promotes the GTP-dependent binding of aminoacyl-tRNA to the A-site of ribosomes during protein biosynthesis. This chain is Elongation factor Tu 1, found in Wolbachia pipientis wMel.